The sequence spans 545 residues: Chaperonin GroEL (545 aa).

ATP contacts are provided by residues Thr-30–Pro-33, Lys-51, Asp-87–Thr-91, Gly-415, Asn-479–Ala-481, and Asp-495. Positions Lys-526–Met-545 are disordered. The segment covering Ala-535–Met-545 has biased composition (gly residues).

It belongs to the chaperonin (HSP60) family. Forms a cylinder of 14 subunits composed of two heptameric rings stacked back-to-back. Interacts with the co-chaperonin GroES.

Its subcellular location is the cytoplasm. It catalyses the reaction ATP + H2O + a folded polypeptide = ADP + phosphate + an unfolded polypeptide.. In terms of biological role, together with its co-chaperonin GroES, plays an essential role in assisting protein folding. The GroEL-GroES system forms a nano-cage that allows encapsulation of the non-native substrate proteins and provides a physical environment optimized to promote and accelerate protein folding. This Blochmanniella pennsylvanica (strain BPEN) protein is Chaperonin GroEL.